Consider the following 357-residue polypeptide: Cytochrome c peroxidase, mitochondrial (357 aa).

Residues 1 to 23 (MSATALRIAPIASRTFQRRLGYL) constitute a mitochondrion transit peptide. The Proton acceptor role is filled by His-116. Positions 189–212 (PWRSGRTDLPEDMTPDNGRLPDGD) are disordered. His-239 is a heme b binding site. Catalysis depends on Trp-255, which acts as the Tryptophan radical intermediate.

Belongs to the peroxidase family. Cytochrome c peroxidase subfamily. Forms a one-to-one complex with cytochrome c. Heme b serves as cofactor.

The protein resides in the mitochondrion matrix. It localises to the mitochondrion intermembrane space. The catalysed reaction is 2 Fe(II)-[cytochrome c] + H2O2 + 2 H(+) = 2 Fe(III)-[cytochrome c] + 2 H2O. Its function is as follows. Destroys radicals which are normally produced within the cells and which are toxic to biological systems. In Candida glabrata (strain ATCC 2001 / BCRC 20586 / JCM 3761 / NBRC 0622 / NRRL Y-65 / CBS 138) (Yeast), this protein is Cytochrome c peroxidase, mitochondrial.